The primary structure comprises 160 residues: SsrA-binding protein (160 aa).

This sequence belongs to the SmpB family.

Its subcellular location is the cytoplasm. Functionally, required for rescue of stalled ribosomes mediated by trans-translation. Binds to transfer-messenger RNA (tmRNA), required for stable association of tmRNA with ribosomes. tmRNA and SmpB together mimic tRNA shape, replacing the anticodon stem-loop with SmpB. tmRNA is encoded by the ssrA gene; the 2 termini fold to resemble tRNA(Ala) and it encodes a 'tag peptide', a short internal open reading frame. During trans-translation Ala-aminoacylated tmRNA acts like a tRNA, entering the A-site of stalled ribosomes, displacing the stalled mRNA. The ribosome then switches to translate the ORF on the tmRNA; the nascent peptide is terminated with the 'tag peptide' encoded by the tmRNA and targeted for degradation. The ribosome is freed to recommence translation, which seems to be the essential function of trans-translation. The protein is SsrA-binding protein of Citrobacter koseri (strain ATCC BAA-895 / CDC 4225-83 / SGSC4696).